The sequence spans 322 residues: D-specific alpha-keto acid dehydrogenase (322 aa).

NAD(+) is bound by residues 156–157, 229–231, and Asp-255; these read QI and TGR. Arg-231 is an active-site residue. The active site involves Glu-260. His-292 acts as the Proton donor in catalysis. 292–295 lines the NAD(+) pocket; the sequence is HTAY.

It belongs to the D-isomer specific 2-hydroxyacid dehydrogenase family.

The catalysed reaction is a (2R)-2-hydroxycarboxylate + NADP(+) = a 2-oxocarboxylate + NADPH + H(+). The enzyme catalyses a (2R)-2-hydroxycarboxylate + NAD(+) = a 2-oxocarboxylate + NADH + H(+). It catalyses the reaction (R)-lactate + NADP(+) = pyruvate + NADPH + H(+). It carries out the reaction (R)-lactate + NAD(+) = pyruvate + NADH + H(+). The catalysed reaction is (2R)-hydroxybutanoate + NADP(+) = 2-oxobutanoate + NADPH + H(+). Its function is as follows. Required for high-level resistance to glycopeptide antibiotics. Catalyzes the reduction of 2-keto acids to 2-D-hydroxy acids, exhibiting highest catalytic efficiency with pyruvate and 2-oxobutanoate/alpha-ketobutyrate as substrates, producing D-lactate and (2R)-hydroxybutanoate, respectively. Together with D-alanine--D-lactate ligase VanA, gives rise to peptidoglycan precursors that terminate in the depsipeptide D-alanine-D-lactate rather than the dipeptide D-alanine-D-alanine thus preventing vancomycin binding. Shows a slight preference for NADPH over NADH as the electron donor. The chain is D-specific alpha-keto acid dehydrogenase from Enterococcus faecium (Streptococcus faecium).